We begin with the raw amino-acid sequence, 96 residues long: UPF0235 protein YggU (96 aa).

This sequence belongs to the UPF0235 family.

The chain is UPF0235 protein YggU from Escherichia coli O157:H7.